A 356-amino-acid chain; its full sequence is 3-dehydroquinate synthase (356 aa).

NAD(+) contacts are provided by residues Gly-101–Asp-105, Thr-125–Thr-126, Lys-138, and Lys-147. Zn(2+) is bound by residues Glu-180, His-243, and His-260.

It belongs to the sugar phosphate cyclases superfamily. Dehydroquinate synthase family. The cofactor is Co(2+). Zn(2+) serves as cofactor. It depends on NAD(+) as a cofactor.

The protein localises to the cytoplasm. The catalysed reaction is 7-phospho-2-dehydro-3-deoxy-D-arabino-heptonate = 3-dehydroquinate + phosphate. It participates in metabolic intermediate biosynthesis; chorismate biosynthesis; chorismate from D-erythrose 4-phosphate and phosphoenolpyruvate: step 2/7. Its function is as follows. Catalyzes the conversion of 3-deoxy-D-arabino-heptulosonate 7-phosphate (DAHP) to dehydroquinate (DHQ). In Alkaliphilus metalliredigens (strain QYMF), this protein is 3-dehydroquinate synthase.